Consider the following 285-residue polypeptide: Urease accessory protein UreD 1 (285 aa).

This sequence belongs to the UreD family. UreD, UreF and UreG form a complex that acts as a GTP-hydrolysis-dependent molecular chaperone, activating the urease apoprotein by helping to assemble the nickel containing metallocenter of UreC. The UreE protein probably delivers the nickel.

Its subcellular location is the cytoplasm. Functionally, required for maturation of urease via the functional incorporation of the urease nickel metallocenter. The chain is Urease accessory protein UreD 1 from Pseudomonas syringae pv. syringae (strain B728a).